Here is a 197-residue protein sequence, read N- to C-terminus: uncharacterized protein (197 aa).

The chain crosses the membrane as a helical span at residues 11–31 (ICGFSLVALTIAGIVGGVYLV).

It is found in the membrane. This is an uncharacterized protein from Mycoplasma pneumoniae (strain ATCC 29342 / M129 / Subtype 1) (Mycoplasmoides pneumoniae).